We begin with the raw amino-acid sequence, 214 residues long: Ras-like protein rasZ (214 aa).

GTP is bound at residue 16–23 (GDGGVGKT). An Effector region motif is present at residues 38–46 (YDPTIEDSY). Residues 63 to 67 (DTAGQ) and 122 to 125 (NKSD) contribute to the GTP site. Cys-211 carries the post-translational modification Cysteine methyl ester. The S-geranylgeranyl cysteine moiety is linked to residue Cys-211. A propeptide spans 212–214 (KMM) (removed in mature form).

Belongs to the small GTPase superfamily. Ras family.

It localises to the cell membrane. It carries out the reaction GTP + H2O = GDP + phosphate + H(+). Functionally, ras proteins bind GDP/GTP and possess intrinsic GTPase activity. This is Ras-like protein rasZ (rasZ) from Dictyostelium discoideum (Social amoeba).